We begin with the raw amino-acid sequence, 112 residues long: MKKKTGQLYEGAYVFSVTLSEDARRKALEKVTSGITNYGGEVLKIHDQGRKKLAYTIRGAREGYYYFIYFTVAPEAISELWREYHLNEDLLRFMTLKASAVKEVLEFATLPE.

Belongs to the bacterial ribosomal protein bS6 family.

Functionally, binds together with bS18 to 16S ribosomal RNA. This is Small ribosomal subunit protein bS6 (rpsF) from Chlamydia muridarum (strain MoPn / Nigg).